Consider the following 3838-residue polypeptide: Replicase polyprotein 1ab (3838 aa).

The C4-type; atypical zinc-finger motif lies at 8 to 28; sequence CMCTPAARVFWNAGQVFCTRC. The 112-residue stretch at 69-180 folds into the Peptidase C31 domain; the sequence is ECTPSGCCWL…QPFCPFEEAH (112 aa). The PCP1-alpha stretch occupies residues 69–182; the sequence is ECTPSGCCWL…FCPFEEAHSD (114 aa). Residues Cys-76 and His-146 each act as for Nsp1-alpha papain-like cysteine proteinase activity in the active site. Residues 203–204 form an important for host EIF2AK2 inhibition region; that stretch reads MM. The interval 269–384 is PCP1-beta; it reads PNVFDGKCWL…IFRFGAHKWY (116 aa). Residues 269–385 form the Peptidase C32 domain; sequence PNVFDGKCWL…FRFGAHKWYG (117 aa). Residues Cys-276 and His-345 each act as for Nsp1-beta papain-like cysteine proteinase activity in the active site. An OTU-like region spans residues 418-505; the sequence is ITTYSPPTDG…GVHWEVEVRS (88 aa). The Peptidase C33 domain maps to 420–527; the sequence is TYSPPTDGSC…VGVCSEGCVA (108 aa). Residues Cys-429 and His-498 each act as for Nsp2 cysteine proteinase activity in the active site. Disordered stretches follow at residues 728-758 and 1027-1064; these read AIGS…SHPA and SVTP…SHAS. Basic and acidic residues predominate over residues 737–749; it reads DSKRENMHNSRED. A run of 5 helical transmembrane segments spans residues 1094 to 1114, 1117 to 1137, 1162 to 1182, 1211 to 1231, and 1235 to 1255; these read LMTW…TLFS, GSMA…LLLC, GVFG…SNPV, GLVV…LGGS, and WHVI…VYVV. The HD1 stretch occupies residues 1132–1255; that stretch reads LALLLCRSYP…DLALSLVYVV (124 aa). Residues 1310-1334 form a WCCH region; sequence TGWRGCWRGESPIHQPHQKPIAYAN. A run of 4 helical transmembrane segments spans residues 1450–1470, 1526–1546, 1556–1576, and 1592–1612; these read TLAV…GLWF, EVGI…RLAL, AFCA…PILL, and FLVF…GLLW. Residues 1451 to 1612 are HD2; sequence LAVAQVSVWT…LSLGITGLLW (162 aa). One can recognise a Peptidase S32 domain in the interval 1677–1879; that stretch reads GAFRTHKPCL…SLLASVPVME (203 aa). Active-site charge relay system; for 3C-like serine proteinase activity residues include His-1715, Asp-1740, and Ser-1793. Helical transmembrane passes span 1875-1895, 1916-1936, 1960-1980, 2003-2023, and 2029-2048; these read VPVM…FLLW, ILPA…LAWA, LAFY…AFAG, SYVP…LWLF, and HNML…RYFA. The segment at 1902 to 2023 is HD3; it reads WTPIVAVGFF…HALGVILWLF (122 aa). Residues 2364–2527 form the NiRAN domain; that stretch reads IISQLQGLTT…LPYKLYPVRG (164 aa). The region spanning 2765–2899 is the RdRp catalytic domain; sequence AGRCLEADLA…LYAERPTFPN (135 aa). The 64-residue stretch at 3021–3084 folds into the AV ZBD domain; it reads GKKFRHCGIC…SPVGAGRSPL (64 aa). Cys-3027, Cys-3030, Cys-3040, Cys-3045, His-3048, His-3050, His-3052, His-3054, Cys-3061, His-3063, Cys-3070, and Cys-3073 together coordinate Zn(2+). In terms of domain architecture, (+)RNA virus helicase ATP-binding spans 3134–3293; the sequence is DLPDGDYQVV…VFDQMPQKQL (160 aa). Position 3168–3175 (3168–3175) interacts with ATP; sequence VGPPGSGK. A (+)RNA virus helicase C-terminal domain is found at 3294 to 3423; it reads TTIYRFGPNI…FSRGDDLVVL (130 aa). The AV-Nsp11N/CoV-Nsp15M domain maps to 3462 to 3559; sequence EGSCMPLPQV…LTLYIRGEPQ (98 aa). Residues 3561–3683 enclose the NendoU domain; the sequence is LPETLVSTGR…MVWKGATAYF (123 aa). Active-site residues include His-3592, His-3607, and Lys-3636.

This sequence belongs to the arteriviridae polyprotein family. Nsp1-alpha papain-like: Interacts with host RNF31. In terms of assembly, interacts with host EIF2AK2; this interaction occurs in host stress granules and leads to EIF2AK2 inhibition. Interacts with host G3BP1; this interaction probably plays a role in Nsp1-beta-mediated inhibition of host EIF2AK2. As to quaternary structure, interacts with host DDX18; this interaction redistributes host DDX18 to the cytoplasm. Interacts with host IFITM1. In terms of assembly, interacts with host DDX5. As to quaternary structure, interacts with host OTULIN. Interacts with host LGALS3. Post-translationally, specific enzymatic cleavages in vivo by its own proteases yield mature proteins. Nsp1 is autocleaved into two subunits, Nsp1-alpha and Nsp1-beta. There are two alternative pathways for processing. Either nsp4-5 is cleaved, which represents the major pathway or the nsp5-6 and nsp6-7 are processed, which represents the minor pathway. The major pathway occurs when nsp2 acts as a cofactor for nsp4.

The protein resides in the host nucleus. It localises to the host cytoplasm. It is found in the host membrane. Its subcellular location is the host endoplasmic reticulum. The protein localises to the host perinuclear region. It carries out the reaction RNA(n) + a ribonucleoside 5'-triphosphate = RNA(n+1) + diphosphate. It catalyses the reaction ATP + H2O = ADP + phosphate + H(+). The enzyme catalyses Thiol-dependent hydrolysis of ester, thioester, amide, peptide and isopeptide bonds formed by the C-terminal Gly of ubiquitin (a 76-residue protein attached to proteins as an intracellular targeting signal).. The catalysed reaction is uridylyl-uridylyl-ribonucleotide-RNA = a 3'-end uridylyl-2',3'-cyclophospho-uridine-RNA + a 5'-end dephospho-ribonucleoside-RNA. Functionally, contains the activities necessary for the transcription of negative stranded RNA, leader RNA, subgenomic mRNAs and progeny virion RNA as well as proteinases responsible for the cleavage of the polyprotein into functional products. Its function is as follows. Inhibits host IFN-beta production. Plays a role in the degradation of the host transcriptional activator CREBBP protein. The degradation of host CREBBP which is a key component of the IFN enhanceosome is likely responsible for the inhibition of interferon mediated by Nsp1-alpha. Also participates in the inhibition of host NF-kappa-B activation by counteracting LUBAC-dependent induction of NF-kappa-B. Reduces host NEMO ubiquitination by blocking the interaction between the two LUBAC complex components RNF31 and SHARPIN. Plays a role in blocking host mRNA nuclear export to the cytoplasm and subversion of host protein synthesis. Additionally, inhibits the interferon-activated JAK/STAT signal transduction by mediating the ubiquitination and subsequent proteasomal degradation of host KPNA1. Repurposes the host antiviral stress granules into a proviral platform to counteract the EIF2AK2/PKR restriction, thereby regulating the host inflammatory response. In terms of biological role, multifunctional protein that acts as a viral protease and as a viral antagonist of host immune response. Cleaves the nsp2/nsp3 site in the viral polyprotein. Displays deubiquitinating activity that cleaves both ubiquitinated and ISGylated products and therefore inhibits ubiquitin and ISG15-dependent host innate immunity. Also deubiquinates host NFKBIA, thereby interfering with NFKBIA degradation and impairing subsequent NF-kappa-B activation. Functionally, plays a role in the inhibition of the immune response by interacting with host IFITM1. This interaction leads to the proteasomal degradation of the IFN-induced antiviral protein IFITM1. Its function is as follows. Cleaves the majority of cleavage sites present in the C-terminus of the polyprotein. Triggers host apoptosis through caspase-3, -8, and -9 activations. Subverts host innate immune responses through its protease activity. Targets the NF-kappa-B essential modulator NEMO and mediates its cleavage. Blocks host interferon beta induction and downstream signaling by cleaving mitochondrial MAVS, dislodging it from the mitochondria. Impairs host defense by cleaving host mRNA-decapping enzyme DCP1A to attenuate its antiviral activity. Plays a role in the initial induction of autophagosomes from host endoplasmic reticulum. In terms of biological role, plays a role in the inhibition of host STAT3 signaling pathway by inducing the degradation of STAT3. Functionally, responsible for replication and transcription of the viral RNA genome. Its function is as follows. Displays RNA and DNA duplex-unwinding activities with 5' to 3' polarity. Plays a role in viral transcription/replication and prevents the simultaneous activation of host cell dsRNA sensors, such as MDA5/IFIH1, OAS, PKR and NLRP3 inflammasome. Acts by degrading the 5'-polyuridines generated during replication of the poly(A) region of viral genomic and subgenomic RNAs. Catalyzes a two-step reaction in which a 2'3'-cyclic phosphate (2'3'-cP) is first generated by 2'-O transesterification, which is then hydrolyzed to a 3'-phosphate (3'-P). If not degraded, poly(U) RNA would hybridize with poly(A) RNA tails and activate host dsRNA sensors. Also plays a role in the inhibition of host type I interferon production by recruiting host OTULIN to promote removal of linear ubiquitination targeting host NEMO. The chain is Replicase polyprotein 1ab from Sus scrofa (Pig).